A 507-amino-acid polypeptide reads, in one-letter code: Protein MosB (507 aa).

Residues 256–275 (QAHGALYKGQHVGLLSDIGC) constitute a DNA-binding region (H-T-H motif). K282 is subject to N6-(pyridoxal phosphate)lysine.

It belongs to the DegT/DnrJ/EryC1 family.

In terms of biological role, involved in the biosynthesis of the rhizopine 3-O-methyl-scyllo-inosamine. May have a regulatory role in controlling the housekeeping genes within the nodule which are involved in the biosynthesis of the rhizopine backbone. This is Protein MosB (mosB) from Rhizobium meliloti (Ensifer meliloti).